Reading from the N-terminus, the 256-residue chain is Inositol-1-monophosphatase (256 aa).

Positions 60, 77, 79, and 80 each coordinate Mg(2+). Position 60 (Glu60) interacts with substrate. Substrate contacts are provided by residues 79–82, Arg178, and Asp207; that span reads LDGT. Residue Asp207 participates in Mg(2+) binding.

The protein belongs to the inositol monophosphatase superfamily. Requires Mg(2+) as cofactor.

The enzyme catalyses a myo-inositol phosphate + H2O = myo-inositol + phosphate. The polypeptide is Inositol-1-monophosphatase (suhB) (Caulobacter vibrioides (strain ATCC 19089 / CIP 103742 / CB 15) (Caulobacter crescentus)).